Here is a 148-residue protein sequence, read N- to C-terminus: D-aminoacyl-tRNA deacylase (148 aa).

The short motif at 137 to 138 is the Gly-cisPro motif, important for rejection of L-amino acids element; that stretch reads GP.

Belongs to the DTD family. As to quaternary structure, homodimer.

Its subcellular location is the cytoplasm. The catalysed reaction is glycyl-tRNA(Ala) + H2O = tRNA(Ala) + glycine + H(+). The enzyme catalyses a D-aminoacyl-tRNA + H2O = a tRNA + a D-alpha-amino acid + H(+). Functionally, an aminoacyl-tRNA editing enzyme that deacylates mischarged D-aminoacyl-tRNAs. Also deacylates mischarged glycyl-tRNA(Ala), protecting cells against glycine mischarging by AlaRS. Acts via tRNA-based rather than protein-based catalysis; rejects L-amino acids rather than detecting D-amino acids in the active site. By recycling D-aminoacyl-tRNA to D-amino acids and free tRNA molecules, this enzyme counteracts the toxicity associated with the formation of D-aminoacyl-tRNA entities in vivo and helps enforce protein L-homochirality. The chain is D-aminoacyl-tRNA deacylase from Latilactobacillus sakei subsp. sakei (strain 23K) (Lactobacillus sakei subsp. sakei).